The sequence spans 363 residues: uncharacterized protein (363 aa).

The next 4 helical transmembrane spans lie at 34–54 (YVYDIALIAISILCIVSIILW), 60–80 (LALFAIAPALAIGALGVTLLV), 91–111 (EIADTVAAVSLPFILTGTAAG), and 112–132 (LMFSAIAVGGGAVILANPLFL). Polar residues predominate over residues 232–245 (SSTTTHSTDSEQIL). The interval 232 to 363 (SSTTTHSTDS…SSQKKKPSRK (132 aa)) is disordered. Composition is skewed to low complexity over residues 246–268 (TSVSPQSSDTESSSSSSFHTPPN) and 275–285 (DSNSSDSSSSS). A compositionally biased stretch (basic and acidic residues) spans 322–342 (SRSERNAQHHRNKDQEQRQDS).

It belongs to the chlamydial CPn_0443/CT_005/TC_0273 family.

It is found in the cell membrane. This is an uncharacterized protein from Chlamydia trachomatis serovar D (strain ATCC VR-885 / DSM 19411 / UW-3/Cx).